The following is an 82-amino-acid chain: Sulfur carrier protein TusA (82 aa).

Residue cysteine 19 is the Cysteine persulfide intermediate of the active site.

The protein belongs to the sulfur carrier protein TusA family.

It localises to the cytoplasm. Functionally, sulfur carrier protein which probably makes part of a sulfur-relay system. The sequence is that of Sulfur carrier protein TusA from Vibrio cholerae serotype O1 (strain ATCC 39541 / Classical Ogawa 395 / O395).